The primary structure comprises 203 residues: Small ribosomal subunit protein uS4 (203 aa).

Positions Arg93–Val156 constitute an S4 RNA-binding domain.

It belongs to the universal ribosomal protein uS4 family. Part of the 30S ribosomal subunit. Contacts protein S5. The interaction surface between S4 and S5 is involved in control of translational fidelity.

In terms of biological role, one of the primary rRNA binding proteins, it binds directly to 16S rRNA where it nucleates assembly of the body of the 30S subunit. Its function is as follows. With S5 and S12 plays an important role in translational accuracy. The protein is Small ribosomal subunit protein uS4 of Streptococcus mutans serotype c (strain ATCC 700610 / UA159).